Here is a 336-residue protein sequence, read N- to C-terminus: Succinylglutamate desuccinylase (336 aa).

Residues His59, Glu62, and His151 each contribute to the Zn(2+) site. Residue Glu215 is part of the active site.

It belongs to the AspA/AstE family. Succinylglutamate desuccinylase subfamily. Zn(2+) serves as cofactor.

The enzyme catalyses N-succinyl-L-glutamate + H2O = L-glutamate + succinate. It participates in amino-acid degradation; L-arginine degradation via AST pathway; L-glutamate and succinate from L-arginine: step 5/5. In terms of biological role, transforms N(2)-succinylglutamate into succinate and glutamate. The protein is Succinylglutamate desuccinylase of Pseudomonas fluorescens (strain Pf0-1).